Here is a 95-residue protein sequence, read N- to C-terminus: MAPPPACRSPMSPPPPPLLLLLLSLALLGARARAEPAGSAVPAQSRPCVDCHAFEFMQRALQDLRKTACSLDARTETLLLQAERRALCACWPAGH.

Positions 1-34 (MAPPPACRSPMSPPPPPLLLLLLSLALLGARARA) are cleaved as a signal peptide.

The protein belongs to the NICOL family. As to quaternary structure, interacts with NELL2; triggers epididymal differentiation. Interacts with cell surface receptor TFRC; the interaction mediates uptake of NICOL1 into fibroblasts. In terms of tissue distribution, detected in the brain (at protein level). Also expressed at low levels in the kidney, primarily in tubular epithelial cells.

It localises to the secreted. It is found in the cytoplasm. The protein localises to the perinuclear region. Functionally, mRNA-binding protein which interacts with a range of target mRNAs including SERPINE1, ACTA2, CCN2 and COL4A1 and may promote extracellular matrix production. Binds to the 3'-UTR of SERPINE1 mRNA and stabilizes the mRNA, possibly by competing for binding with SERBP1 and preventing SERBP1-mediated mRNA degradation. Also binds to the 3'-UTR of ACTA2. Testis-derived lumicrine factor that triggers epididymal differentiation and sperm maturation. The protein is NELL2-interacting cell ontogeny regulator 1 of Homo sapiens (Human).